Consider the following 261-residue polypeptide: Putative hydro-lyase VSAL_I1435 (261 aa).

Belongs to the D-glutamate cyclase family.

The chain is Putative hydro-lyase VSAL_I1435 from Aliivibrio salmonicida (strain LFI1238) (Vibrio salmonicida (strain LFI1238)).